Consider the following 73-residue polypeptide: UPF0154 protein MYCGA5700 (73 aa).

A helical transmembrane segment spans residues 5-25 (LALGLSIPLCLIVGAFVGYFV).

This sequence belongs to the UPF0154 family.

The protein resides in the membrane. This Mycoplasmoides gallisepticum (strain R(low / passage 15 / clone 2)) (Mycoplasma gallisepticum) protein is UPF0154 protein MYCGA5700.